Here is a 380-residue protein sequence, read N- to C-terminus: PqqA peptide cyclase (380 aa).

In terms of domain architecture, Radical SAM core spans 12-228; sequence FGIPLAVLLE…EEARERLKGR (217 aa). Positions 26, 30, and 33 each coordinate [4Fe-4S] cluster.

Belongs to the radical SAM superfamily. PqqE family. As to quaternary structure, interacts with PqqD. The interaction is necessary for activity of PqqE. [4Fe-4S] cluster serves as cofactor.

It catalyses the reaction [PQQ precursor protein] + S-adenosyl-L-methionine = E-Y cross-linked-[PQQ precursor protein] + 5'-deoxyadenosine + L-methionine + H(+). The protein operates within cofactor biosynthesis; pyrroloquinoline quinone biosynthesis. Its function is as follows. Catalyzes the cross-linking of a glutamate residue and a tyrosine residue in the PqqA protein as part of the biosynthesis of pyrroloquinoline quinone (PQQ). This Bradyrhizobium diazoefficiens (strain JCM 10833 / BCRC 13528 / IAM 13628 / NBRC 14792 / USDA 110) protein is PqqA peptide cyclase.